We begin with the raw amino-acid sequence, 379 residues long: Chaperone protein DnaJ (379 aa).

A J domain is found at 5–71; it reads DYYEILGVSR…EKRAMYDRFG (67 aa). The CR-type zinc finger occupies 149–231; sequence GTTIPIEYDR…CGGSGRIRKR (83 aa). C162, C165, C179, C182, C205, C208, C219, and C222 together coordinate Zn(2+). CXXCXGXG motif repeat units lie at residues 162–169, 179–186, 205–212, and 219–226; these read CSHCNGEG, CPKCHGTG, CNQCGGTG, and CHVCGGSG.

The protein belongs to the DnaJ family. As to quaternary structure, homodimer. Requires Zn(2+) as cofactor.

The protein resides in the cytoplasm. Participates actively in the response to hyperosmotic and heat shock by preventing the aggregation of stress-denatured proteins and by disaggregating proteins, also in an autonomous, DnaK-independent fashion. Unfolded proteins bind initially to DnaJ; upon interaction with the DnaJ-bound protein, DnaK hydrolyzes its bound ATP, resulting in the formation of a stable complex. GrpE releases ADP from DnaK; ATP binding to DnaK triggers the release of the substrate protein, thus completing the reaction cycle. Several rounds of ATP-dependent interactions between DnaJ, DnaK and GrpE are required for fully efficient folding. Also involved, together with DnaK and GrpE, in the DNA replication of plasmids through activation of initiation proteins. The protein is Chaperone protein DnaJ of Thermosipho africanus (strain TCF52B).